A 185-amino-acid polypeptide reads, in one-letter code: MANAIVEKAKERMSHSHQNLAREFGAVRAGRANASLLDRISVEYYGVETPLNQIASITIPEARVLLVTPFDKSSLKDIERAINASDLGITPASDGSVIRLVIPALTEETRRDLAKEVKKIGENAKIAIRNIRRDAMDEAKKQEKAKEITEDELKTLEKDIQKVTDDAVKHIDEMTAHKEKELLEV.

Belongs to the RRF family.

It localises to the cytoplasm. In terms of biological role, responsible for the release of ribosomes from messenger RNA at the termination of protein biosynthesis. May increase the efficiency of translation by recycling ribosomes from one round of translation to another. The chain is Ribosome-recycling factor from Streptococcus gordonii (strain Challis / ATCC 35105 / BCRC 15272 / CH1 / DL1 / V288).